Reading from the N-terminus, the 64-residue chain is Large ribosomal subunit protein bL35 (64 aa).

The protein belongs to the bacterial ribosomal protein bL35 family.

The chain is Large ribosomal subunit protein bL35 from Acidothermus cellulolyticus (strain ATCC 43068 / DSM 8971 / 11B).